A 176-amino-acid polypeptide reads, in one-letter code: Large ribosomal subunit protein uL6 (176 aa).

It belongs to the universal ribosomal protein uL6 family. In terms of assembly, part of the 50S ribosomal subunit.

Functionally, this protein binds to the 23S rRNA, and is important in its secondary structure. It is located near the subunit interface in the base of the L7/L12 stalk, and near the tRNA binding site of the peptidyltransferase center. This Lactobacillus gasseri (strain ATCC 33323 / DSM 20243 / BCRC 14619 / CIP 102991 / JCM 1131 / KCTC 3163 / NCIMB 11718 / NCTC 13722 / AM63) protein is Large ribosomal subunit protein uL6.